We begin with the raw amino-acid sequence, 529 residues long: E3 ubiquitin-protein ligase arih1 (529 aa).

Disordered stretches follow at residues 1–30 (MDSDEGYNYEFDDEEECSEDSGADEHEDDL) and 49–68 (GICGEGGGSALGPGPGGEEE). Residues 51–64 (CGEGGGSALGPGPG) show a composition bias toward gly residues. The interval 77-125 (TAEQILQHMVECIREVNEVIQNPATITRILLSHFNWDKEKLMERYFDGN) is UBA-like. The TRIAD supradomain stretch occupies residues 154 to 365 (QDMPCQICYL…SAWYNCNRYN (212 aa)). Residues C158, C161, C175, H177, C180, C183, C203, C208, C248, C253, C269, C271, C276, C279, H284, C289, C316, and C319 each coordinate Zn(2+). Residues 158–208 (CQICYLNYPNSYFTGLECGHKFCMQCWSEYLTTKIIEEGMGQTISCPAHGC) form an RING-type 1 zinc finger. The segment at 228–289 (LKYQHLITNS…GENWHDPVKC (62 aa)) adopts an IBR-type zinc-finger fold. The segment at 316 to 347 (CPKCHVTIEKDGGCNHMVCRNQNCKAEFCWVC) adopts an RING-type 2; atypical zinc-finger fold. The active site involves C329. Residues C334, C339, C344, C347, H354, and C361 each contribute to the Zn(2+) site. The ariadne domain stretch occupies residues 380-529 (RAALQRYLFY…EKDLWEYIED (150 aa)).

The protein belongs to the RBR family. Ariadne subfamily. Interacts (via the first RING-type zinc finger) with ube2l3. Associates with cullin-RING ubiquitin ligase (CRL) complexes containing neddylated cullin.

Its subcellular location is the cytoplasm. The protein resides in the nucleus. It catalyses the reaction [E2 ubiquitin-conjugating enzyme]-S-ubiquitinyl-L-cysteine + [acceptor protein]-L-lysine = [E2 ubiquitin-conjugating enzyme]-L-cysteine + [acceptor protein]-N(6)-ubiquitinyl-L-lysine.. The protein operates within protein modification; protein ubiquitination. Autoinhibited by the ariadne domain, which masks the second RING-type zinc finger that contains the active site and inhibits the E3 activity. Inhibition is relieved upon binding to neddylated cullin-RING ubiquitin ligase complexes, which activate the E3 ligase activity of ARIH1. E3 ubiquitin-protein ligase, which catalyzes ubiquitination of target proteins together with ubiquitin-conjugating enzyme E2 ube2l3. Acts as an atypical E3 ubiquitin-protein ligase by working together with cullin-RING ubiquitin ligase (CRL) complexes and initiating ubiquitination of CRL substrates: associates with CRL complexes and specifically mediates addition of the first ubiquitin on CRLs targets. The initial ubiquitin is then elongated. E3 ubiquitin-protein ligase activity is activated upon binding to neddylated cullin-RING ubiquitin ligase complexes. This Xenopus tropicalis (Western clawed frog) protein is E3 ubiquitin-protein ligase arih1 (arih1).